The sequence spans 803 residues: Leucine--tRNA ligase (803 aa).

A 'HIGH' region motif is present at residues 40-51 (PYPSGAGLHVGH). Residues 575-579 (KMSKS) carry the 'KMSKS' region motif. Lys578 is an ATP binding site.

This sequence belongs to the class-I aminoacyl-tRNA synthetase family.

The protein localises to the cytoplasm. The catalysed reaction is tRNA(Leu) + L-leucine + ATP = L-leucyl-tRNA(Leu) + AMP + diphosphate. The protein is Leucine--tRNA ligase of Listeria welshimeri serovar 6b (strain ATCC 35897 / DSM 20650 / CCUG 15529 / CIP 8149 / NCTC 11857 / SLCC 5334 / V8).